The following is a 283-amino-acid chain: Acyl-coenzyme A diphosphatase FITM2 (283 aa).

The segment covering 1-11 (MSTRRSSTRAD) has biased composition (low complexity). The interval 1 to 21 (MSTRRSSTRADSTTKRPASPN) is disordered. Residues 1 to 39 (MSTRRSSTRADSTTKRPASPNSTPNAALGIFVAIARQIL) lie on the Cytoplasmic side of the membrane. A helical transmembrane segment spans residues 40 to 60 (FIDARKVALFYLAFVTVLSFI). Topologically, residues 61-81 (ESRIELDSTYYLVQKHSVLNQ) are lumenal. A helical membrane pass occupies residues 82 to 102 (YGVKMGWFWTLVIVGPFIWFS). Topologically, residues 103–120 (SKAHNRRDRDQPIVDVCR) are cytoplasmic. A helical membrane pass occupies residues 121–141 (LGVGTACWYFSVQFFHKVLAL). At 142–168 (TSMCDKGRTLTRAQCSEKEGVWTPGYD) the chain is on the lumenal side. A helical membrane pass occupies residues 169–189 (ISGHCFLMIYSILIITEEAIA). Histidine 172 is an active-site residue. Over 190 to 219 (YRHYQQVTDAVHQMDGDREEHDRLTRCIQY) the chain is Cytoplasmic. Helical transmembrane passes span 220-240 (FFVA…ISVL) and 241-261 (YYHI…CWFV). The active site involves histidine 243. Over 262–283 (TYRMLYPAGFLASPIRRTVGRK) the chain is Cytoplasmic.

This sequence belongs to the FIT family. FIT2 subfamily.

It is found in the endoplasmic reticulum membrane. The catalysed reaction is an acyl-CoA + H2O = an acyl-4'-phosphopantetheine + adenosine 3',5'-bisphosphate + 2 H(+). Fatty acyl-coenzyme A (CoA) diphosphatase that hydrolyzes fatty acyl-CoA to yield acyl-4'-phosphopantetheine and adenosine 3',5'-bisphosphate. Preferentially hydrolyzes unsaturated long-chain acyl-CoA substrates in the endoplasmic reticulum (ER) lumen. This catalytic activity is required for maintaining ER structure and for lipid droplets (LDs) biogenesis, which are lipid storage organelles involved in maintaining lipid and energy homeostasis. May directly bind to diacylglycerol (DAGs) and triacylglycerol, which is also important for LD biogenesis. May support directional budding of nacent LDs from the ER into the cytosol by reducing DAG levels at sites of LD formation. May play a role in the regulation of cell morphology, ER morphology and cytoskeletal organization. This Caenorhabditis elegans protein is Acyl-coenzyme A diphosphatase FITM2.